We begin with the raw amino-acid sequence, 369 residues long: Phosphoribosyl pyrophosphate synthase-associated protein 2 (369 aa).

Met1 carries the N-acetylmethionine modification. Residues Ser219, Ser227, and Ser233 each carry the phosphoserine modification.

It belongs to the ribose-phosphate pyrophosphokinase family. In terms of assembly, binds to PRPS1 and PRPS2. Ubiquitous.

In terms of biological role, seems to play a negative regulatory role in 5-phosphoribose 1-diphosphate synthesis. The sequence is that of Phosphoribosyl pyrophosphate synthase-associated protein 2 (Prpsap2) from Rattus norvegicus (Rat).